Consider the following 239-residue polypeptide: MLLQPAPCAPSAGFPRPLAAPGAMHGSQKDTTFTKIFVGGLPYHTTDASLRKYFEGFGDIEEAVVITDRQTGKSRGYGFVTMADRAAAERACKDPNPIIDGRKANVNLAYLGAKPRSLQTGFAIGVQQLHPTLIQRTYGLTPHYIYPPAIVQPSVVIPAAPVPSLSSPYIEYTPASPAYAQYPPATYDQYPYAASPATAASFVGYSYPAAVPQALSAAAPAGTTFVQYQAPQLQPDRMQ.

The 78-residue stretch at 34–111 (TKIFVGGLPY…RKANVNLAYL (78 aa)) folds into the RRM domain.

It belongs to the RBM38 family.

Its subcellular location is the cytoplasm. It is found in the cytosol. The protein resides in the nucleus. Its function is as follows. RNA-binding protein that specifically bind the 3'-UTR of CDKN1A transcripts, leading to maintain the stability of CDKN1A transcripts, thereby acting as a mediator of the p53/TP53 family to regulate CDKN1A. CDKN1A is a cyclin-dependent kinase inhibitor transcriptionally regulated by the p53/TP53 family to induce cell cycle arrest. Isoform 1, but not isoform 2, has the ability to induce cell cycle arrest in G1 and maintain the stability of CDKN1A transcripts induced by p53/TP53. Also acts as a mRNA splicing factor. Specifically regulates the expression of FGFR2-IIIb, an epithelial cell-specific isoform of FGFR2. Plays a role in myogenic differentiation. (Microbial infection) Essential factor for the splicing of the pre-mRNAs of human parvovirus B19 (B19V) and for the expression of B19V 11-kDa protein, which enhances viral replication. This chain is RNA-binding protein 38 (RBM38), found in Homo sapiens (Human).